The primary structure comprises 439 residues: MAASVSTVGAVNRAILNLNGSGAGASAPTSAFFGTSLKKAVASRVPNSKVTNGSFKIVAAEKEIEESQQTNKDRWKGLAYDISDDQQDITRGKGMVDPLFQAPMDAGTHYAVMSSYEYLSTGLRQLDNIKDGFYIAPAFLDKLVVHITKNFMTLPNIKVPLILGIWGGKGQGKSFQCELVFAKMGINPIMMSAGELESGNAGEPAKLIRQRYREAADLIAKGKMCALFINDLDAGAGRLGGTTQYTVNNQMVNATLMNIADNPTNVQLPGMYNKEENARVPIIVTGNDFSTLYAPLIRDGRMEKFYWAPTRDDRVGVCKGIFRTDGVPEEDITKLVDTFPGQSIDFFGALRARVYDDEVRKWISGVGVDATGKKLVNSKEGPPTFDQPKMSLDKLLQYGNMLVQEQENVKRVQLADKYLNEAALGNANEDAIKSGSFFK.

G167–S174 lines the ATP pocket.

This sequence belongs to the RuBisCO activase family.

The protein resides in the plastid. It is found in the chloroplast stroma. Functionally, activation of RuBisCO (ribulose-1,5-bisphosphate carboxylase/oxygenase; EC 4.1.1.39) involves the ATP-dependent carboxylation of the epsilon-amino group of lysine leading to a carbamate structure. The chain is Ribulose bisphosphate carboxylase/oxygenase activase, chloroplastic (RCA) from Vigna radiata var. radiata (Mung bean).